We begin with the raw amino-acid sequence, 253 residues long: Imidazole glycerol phosphate synthase subunit HisF (253 aa).

Catalysis depends on residues Asp-11 and Asp-130.

The protein belongs to the HisA/HisF family. As to quaternary structure, heterodimer of HisH and HisF.

The protein localises to the cytoplasm. It catalyses the reaction 5-[(5-phospho-1-deoxy-D-ribulos-1-ylimino)methylamino]-1-(5-phospho-beta-D-ribosyl)imidazole-4-carboxamide + L-glutamine = D-erythro-1-(imidazol-4-yl)glycerol 3-phosphate + 5-amino-1-(5-phospho-beta-D-ribosyl)imidazole-4-carboxamide + L-glutamate + H(+). It participates in amino-acid biosynthesis; L-histidine biosynthesis; L-histidine from 5-phospho-alpha-D-ribose 1-diphosphate: step 5/9. Functionally, IGPS catalyzes the conversion of PRFAR and glutamine to IGP, AICAR and glutamate. The HisF subunit catalyzes the cyclization activity that produces IGP and AICAR from PRFAR using the ammonia provided by the HisH subunit. In Clostridium botulinum (strain Langeland / NCTC 10281 / Type F), this protein is Imidazole glycerol phosphate synthase subunit HisF.